A 407-amino-acid polypeptide reads, in one-letter code: Accessory Sec system protein translocase subunit SecY2 (407 aa).

A run of 10 helical transmembrane segments spans residues 13 to 33, 65 to 85, 104 to 124, 133 to 153, 158 to 178, 190 to 210, 248 to 268, 287 to 307, 345 to 365, and 370 to 390; these read FLWT…TLPF, LFSV…MFAV, MLLT…NLPL, TTIM…LIWL, AAMG…AYIP, ISSL…YLAV, IMYA…IHFL, PAWF…FAFI, FALV…MVVL, and YLRL…VFSI.

This sequence belongs to the SecY/SEC61-alpha family. SecY2 subfamily. As to quaternary structure, component of the accessory SecA2/SecY2 protein translocase complex required to export cell wall proteins. May form heterotrimers with SecE and SecG subunits.

The protein resides in the cell membrane. Functionally, part of the accessory SecA2/SecY2 system specifically required for export of possible cell wall proteins. The central subunit of a protein translocation channel. The sequence is that of Accessory Sec system protein translocase subunit SecY2 from Streptococcus sanguinis (strain SK36).